The following is a 70-amino-acid chain: Plasticin-S1 (70 aa).

The first 22 residues, 1-22, serve as a signal peptide directing secretion; the sequence is MAFLKKSLFLVLFLALVPLSIC. A propeptide spanning residues 23–45 is cleaved from the precursor; the sequence is EEEKREGENEKEQEDDNQSEEKR. Positions 25–45 are disordered; it reads EKREGENEKEQEDDNQSEEKR.

Belongs to the frog skin active peptide (FSAP) family. Plasticin subfamily. Expressed by the skin glands.

Its subcellular location is the secreted. In terms of biological role, the native peptide is a cationic amphipathic alpha-helical antimicrobial peptide with potent activity against both Gram-positive and Gram-negative bacteria. It has weak activity against fungi and shows low hemolytic activity. The chain is Plasticin-S1 from Phyllomedusa sauvagei (Sauvage's leaf frog).